A 171-amino-acid polypeptide reads, in one-letter code: Sec-independent protein translocase protein TatB (171 aa).

Residues 1-21 (MFDIGFSELLLVFIIGLVVLG) traverse the membrane as a helical segment. The tract at residues 117–171 (KDNEAAHEGVTPAAAQTQASSPEQKPETTPEPVVKPAADAEPKTAAPSPSSSDKP) is disordered. Polar residues predominate over residues 130 to 139 (AAQTQASSPE).

Belongs to the TatB family. In terms of assembly, the Tat system comprises two distinct complexes: a TatABC complex, containing multiple copies of TatA, TatB and TatC subunits, and a separate TatA complex, containing only TatA subunits. Substrates initially bind to the TatABC complex, which probably triggers association of the separate TatA complex to form the active translocon.

The protein resides in the cell inner membrane. Part of the twin-arginine translocation (Tat) system that transports large folded proteins containing a characteristic twin-arginine motif in their signal peptide across membranes. Together with TatC, TatB is part of a receptor directly interacting with Tat signal peptides. TatB may form an oligomeric binding site that transiently accommodates folded Tat precursor proteins before their translocation. This Escherichia coli O157:H7 protein is Sec-independent protein translocase protein TatB.